A 20-amino-acid polypeptide reads, in one-letter code: Outer membrane protein 40Va (20 aa).

This sequence belongs to the Gram-negative porin family. As to quaternary structure, homotrimer.

It is found in the cell outer membrane. Forms pores that allow passive diffusion of small molecules across the outer membrane. This Vibrio alginolyticus protein is Outer membrane protein 40Va.